The chain runs to 150 residues: UPF0260 protein VIBHAR_03078 (150 aa).

Belongs to the UPF0260 family.

The protein is UPF0260 protein VIBHAR_03078 of Vibrio campbellii (strain ATCC BAA-1116).